A 68-amino-acid chain; its full sequence is U-reduvitoxin-Pr3a (68 aa).

An N-terminal signal peptide occupies residues 1–22 (MKAGMKLVLVLVIASIALLALA). 3 disulfide bridges follow: Cys-29–Cys-47, Cys-36–Cys-52, and Cys-46–Cys-59.

Belongs to the venom Ptu1-like knottin family. Expressed by the venom gland.

It localises to the secreted. In terms of biological role, binds reversibly and blocks P/Q-type voltage-gated calcium channels (Cav). The sequence is that of U-reduvitoxin-Pr3a from Platymeris rhadamanthus (Red spot assassin bug).